The chain runs to 240 residues: Dihydromonapterin reductase (240 aa).

Tyr-152 acts as the Proton acceptor in catalysis.

This sequence belongs to the short-chain dehydrogenases/reductases (SDR) family. FolM subfamily.

It catalyses the reaction (6S)-5,6,7,8-tetrahydrofolate + NADP(+) = 7,8-dihydrofolate + NADPH + H(+). It carries out the reaction 7,8-dihydromonapterin + NADPH + H(+) = 5,6,7,8-tetrahydromonapterin + NADP(+). Catalyzes the reduction of dihydromonapterin to tetrahydromonapterin. Also has lower activity with dihydrofolate. The sequence is that of Dihydromonapterin reductase (folM) from Escherichia coli O6:H1 (strain CFT073 / ATCC 700928 / UPEC).